A 66-amino-acid polypeptide reads, in one-letter code: Neurotoxin-like protein STR1 (66 aa).

In terms of domain architecture, LCN-type CS-alpha/beta spans 2–65; it reads RDGYIVHDGT…VWGEDGFMCW (64 aa). Intrachain disulfides connect Cys13/Cys64, Cys17/Cys40, Cys26/Cys45, and Cys30/Cys47.

It belongs to the long (4 C-C) scorpion toxin superfamily. Sodium channel inhibitor family. Beta subfamily. In terms of tissue distribution, expressed by the venom gland.

It localises to the secreted. This protein is not toxic. This is Neurotoxin-like protein STR1 from Androctonus australis (Sahara scorpion).